A 222-amino-acid polypeptide reads, in one-letter code: Gamma-glutamylcyclotransferase and putative RNase MJ0434 (222 aa).

R75 is an active-site residue. The RX(4)HXY motif signature appears at R75 to Y82. Position 82 is an O-di-AMP-tyrosine (Y82).

It in the N-terminal section; belongs to the HepT RNase toxin family. This sequence in the C-terminal section; belongs to the gamma-glutamylcyclotransferase family. As to quaternary structure, homodimer, probably forms a complex with cognate antitoxin MJ0435. Post-translationally, modified by cognate antitoxin MJ0435; probably at least 2 successive AMPylation events occur on Tyr-82.

Its function is as follows. Probable toxic component of a putative type VII toxin-antitoxin (TA) system, probably an RNase. Probably neutralized by cognate antitoxin MJ0435. Neutralization may be due to AMPylation by MJ0435. This chain is Gamma-glutamylcyclotransferase and putative RNase MJ0434, found in Methanocaldococcus jannaschii (strain ATCC 43067 / DSM 2661 / JAL-1 / JCM 10045 / NBRC 100440) (Methanococcus jannaschii).